Reading from the N-terminus, the 437-residue chain is tRNA-queuosine alpha-mannosyltransferase (437 aa).

This sequence belongs to the glycosyltransferase group 1 family. Glycosyltransferase 4 subfamily.

The protein localises to the cytoplasm. It localises to the nucleus. It carries out the reaction queuosine(34) in tRNA(Asp) + GDP-alpha-D-mannose = O-4''-alpha-D-mannosylqueuosine(34) in tRNA(Asp) + GDP + H(+). Functionally, glycosyltransferase that specifically catalyzes mannosylation of cytoplasmic tRNA(Asp) modified with queuosine at position 34 (queuosine(34)). Mannosylates the cyclopentene moiety of queuosine(34) in tRNA(Asp) to form mannosyl-queuosine(34). Mannosylation of queuosine(34) in tRNA(Asp) is required to slow-down elongation at cognate codons, GAC and GAU, thereby regulating protein translation. This chain is tRNA-queuosine alpha-mannosyltransferase (gtdc1), found in Xenopus laevis (African clawed frog).